Consider the following 1831-residue polypeptide: MAEFLDSEAEESEEEEELDVNERKRLKKLKAAVSDSSEEEEDDEERLREELKDLIDDNPIEEDDGSGYDSDGVGSGKKRKKHEDDDLDDRLEDDDYDLIEENLGVKVERRKRFKRLRRIHDNESDGEEQHVDEGLVREQIAEQLFDENDESIGHRSERSHREADDYDDVDTESDADDFIVDDNGRPIAEKKKKRRPIFTDASLQEGQDIFGVDFDYDDFSKYEEDDYEDDSEGDEYDEDLGVGDDTRVKKKKALKKKVVKKTIFDIYEPSELKRGHFTDMDNEIRKTDIPERMQLREVPVTPVPEGSDELDLEAEWIYKYAFCKHTVSEQEKPESREKMRKPPTTVNKIKQTLEFIRNQQLEVPFIAFYRKEYVKPELNIDDLWKVYYYDGIWCQLNERKRKLKVLFEKMRQFQLDTLCADTDQPVPDDVRLILDSDFERLADVQSMEELKDVHMYFLLNYSHELPRMQAEQRRKAIQERREAKARRQAAAAENGDDAAEAIVVPEPEDDDDPELIDYQLKQASNSSPYAVFRKAGICGFAKHFGLTPEQYAENLRDNYQRNEITQESIGPTELAKQYLSPRFMTTDEVIHAAKYVVARQLAQEPLLRKTMREVYFDRARINIRPTKNGMVLIDENSPVYSMKYVAKKPVSDLFGDQFIKLMMAEEEKLLEITFLEEFEGNACANGTPGDYVEESKALYQLDQFAKHVQEWNKLRAECVQLALQKWVIPDLIKELRSTLHEEAQQFVLRSCTGKLYKWLKVAPYKPQLPPDFGYEEWSTLRGIRVLGLAYDPDHSVAAFCAVTTVEGDISDYLRLPNILKRKNSYNLEEKAQKLADLRKLSDFIKMKKPHIVVIGAESRDAQNIQADIKEILHELETSEQFPPIEVEIIDNELAKIYANSKKGESDFKEYPPLLKQAASLARKMQDPLVEYSQLCDADDEILCLRYHPLQERVPREQLLEQLSLQFINRTSEVGLDINLMVQNSRTINLLQYICGLGPRKGQALLKLLKQSNQRLENRTQLVTVCHLGPRVFINCSGFIKIDTSSLGDSTEAYVEVLDGSRVHPETYEWARKMAIDAMEYDDEETNPAGALEEILESPERLKDLDLDAFAVELERQGFGSKSITLYDIRNELSCLYKDYRTPYTKPSAEELFDMLTKETPDSFYVGKCVTAMVTGFTYRRPQGDQLDSANPVRLDSNESWQCPFCHKDDFPELSEVWNHFDANACPGQPSGVRVRLENGLPGFIHIKNLSDRQVRNPEERVRVSQMIHVRIIKIDIDRFSVECSSRTADLKDVNNEWRPRRDNYYDYVTEEQDNRKVSDAKARALKRKIYARRVIAHPSFFNKSYAEVVAMLAEADQGEVALRPSSKSKDHLTATWKVADDIFQHIDVREEGKENDFSLGRSLWIGTEEFEDLDEIIARHIMPMALAARELIQYKYYKPNMVTGDENERDVMEKLLREEKANDPKKIHYFFTASRAMPGKFLLSYLPKTKVRHEYVTVMPEGYRFRGQIFDTVNSLLRWFKEHWLDPTATPASASASNLTPLHLMRPPPTISSSSQTSLGPQAPYSVTGSVTGGTPRSGISSAVGGGGSSAYSITQSITGYGTSGSSAPGAGVSSSHYGSSSTPSFGAINTPYTPSGQTPFMTPYTPHASQTPRYGHNVPSPSSQSSSSQRHHYGSSSGTGSTPRYHDMGGGGGGGVGGGGGSNAYSMQPHHQQRAKENLDWQLANDAWARRRPQQHQSHQSYHAQQQHHHSQQQPHMGMSMNMGITMSLGRGTGGGGGGGYGSTPVNDYSTGGGHNRGMSSKASVRSTPRTNASPHSMNLGDATPLYDEN.

Residues methionine 1–aspartate 19 are compositionally biased toward acidic residues. Disordered regions lie at residues methionine 1–isoleucine 99, arginine 117–threonine 199, lysine 221–leucine 240, and alanine 470–alanine 501. A coiled-coil region spans residues serine 7 to proline 59. Phosphoserine occurs at positions 34, 36, and 37. Over residues glutamate 45–isoleucine 55 the composition is skewed to basic and acidic residues. The segment covering aspartate 56–serine 66 has biased composition (acidic residues). 3 positions are modified to phosphoserine: serine 66, serine 70, and serine 75. The span at aspartate 85–isoleucine 99 shows a compositional bias: acidic residues. 2 stretches are compositionally biased toward basic and acidic residues: residues isoleucine 119–isoleucine 140 and serine 151–alanine 163. Residues serine 124, serine 151, serine 156, and serine 159 each carry the phosphoserine modification. Acidic residues-rich tracts occupy residues aspartate 164–valine 180 and glutamate 223–leucine 240. Threonine 171 bears the Phosphothreonine mark. Serine 173 carries the phosphoserine modification. Positions arginine 467–asparagine 494 form a coiled coil. Residues alanine 470–glutamate 482 show a composition bias toward basic and acidic residues. The region spanning tryptophan 1217–arginine 1286 is the S1 motif domain. Residues isoleucine 1329–asparagine 1440 enclose the SH2 domain. Low complexity predominate over residues proline 1531–leucine 1542. Disordered stretches follow at residues proline 1531–glycine 1587, glycine 1602–alanine 1716, and alanine 1730–asparagine 1831. A compositionally biased stretch (polar residues) spans tyrosine 1565–threonine 1575. The segment covering glycine 1602–glycine 1627 has biased composition (low complexity). Residues threonine 1631–phenylalanine 1641 are compositionally biased toward polar residues. Positions proline 1660–threonine 1683 are enriched in low complexity. Phosphoserine occurs at positions 1661 and 1664. The segment covering methionine 1689–serine 1703 has biased composition (gly residues). Residues glutamine 1736–glutamine 1746 are compositionally biased toward low complexity. Over residues arginine 1772 to glycine 1783 the composition is skewed to gly residues. Over residues glycine 1799–serine 1818 the composition is skewed to polar residues. Serine 1815 carries the post-translational modification Phosphoserine.

Belongs to the SPT6 family. As to quaternary structure, self associates. Interacts with RNA polymerase II. Interacts with the FACT complex, which is composed of dre4/Spt16 and Ssrp/Ssrp1. Interacts with the exosome, a complex with 3'-5' exoribonuclease activity which is composed of at least Csl4, Dis3, Mtr3, Rrp4, Rrp6, Rrp40, Rrp42, Rrp46 and Ski6. Interacts with the DRB sensitivity-inducing factor complex (the DSIF complex), which is composed of Spt4 and Spt5.

The protein localises to the nucleus. Histone H3-H4 chaperone that plays a role in maintenance of chromatin structure during RNA polymerase II transcription elongation. Required for the transcriptional induction of heat shock response genes and for maximal recruitment of two other elongation factors, Spt5 and Paf1, to the induced Hsp70. Plays a critical role in normal fly development throughout the lifecycle. This Drosophila melanogaster (Fruit fly) protein is Transcription elongation factor SPT6 (Spt6).